A 398-amino-acid chain; its full sequence is Keratinocyte differentiation factor 1 (398 aa).

Disordered stretches follow at residues 1–60 and 123–156; these read MPRP…SITF and AEAN…STMG. Residues 44 to 55 show a composition bias toward basic and acidic residues; sequence RPDPKDPGHHGP. Phosphoserine is present on Ser-218. 2 disordered regions span residues 307–340 and 369–392; these read RKSR…TMVG and GAPG…SGAP. The segment covering 377-389 has biased composition (polar residues); sequence HDSSFQGTDTDSS.

Its subcellular location is the cytoplasm. It localises to the cell junction. Its function is as follows. Plays a role in the regulation of the epidermis formation during early development. Required both as an inhibitor of basal cell proliferation and a promoter of differentiation of basal progenitor cell progeny. The sequence is that of Keratinocyte differentiation factor 1 (KDF1) from Homo sapiens (Human).